The sequence spans 505 residues: Metalloprotease TIKI1 (505 aa).

The signal sequence occupies residues 1-19 (MSPWSWFLLQTLCLLPTGA). At 20–477 (ASRRGAPGTA…RRGHSHHSQM (458 aa)) the chain is on the extracellular side. 4 N-linked (GlcNAc...) asparagine glycosylation sites follow: Asn220, Asn229, Asn278, and Asn336. A disordered region spans residues 389-428 (PEAVSSGHSTLPPLVSRPGSADTPSEAEQRFRKKRRRSQR). The segment covering 419–428 (FRKKRRRSQR) has biased composition (basic residues). The chain crosses the membrane as a helical span at residues 478-498 (VASSACLSLWTPVFWVLVLAF). The Cytoplasmic portion of the chain corresponds to 499 to 505 (QTETPLL).

Belongs to the TIKI family. It depends on Mn(2+) as a cofactor. Requires Co(2+) as cofactor.

It localises to the cell membrane. Its function is as follows. Metalloprotease that acts as a negative regulator of the Wnt signaling pathway by mediating the cleavage of the 8 N-terminal residues of a subset of Wnt proteins. Following cleavage, Wnt proteins become oxidized and form large disulfide-bond oligomers, leading to their inactivation. Able to cleave WNT3A, WNT5, but not WNT11. Required for head formation. This is Metalloprotease TIKI1 (TRABD2A) from Homo sapiens (Human).